The primary structure comprises 532 residues: Pyruvate kinase (532 aa).

Arginine 63 is a substrate binding site. The K(+) site is built by asparagine 65, serine 67, aspartate 99, and threonine 100. 65 to 68 (NFSH) is a binding site for ATP. ATP is bound by residues arginine 106 and lysine 191. Glutamate 256 lines the Mg(2+) pocket. Residues glycine 279, aspartate 280, and threonine 312 each contribute to the substrate site. Mg(2+) is bound at residue aspartate 280.

Belongs to the pyruvate kinase family. As to quaternary structure, homotetramer. Requires Mg(2+) as cofactor. It depends on K(+) as a cofactor.

The catalysed reaction is pyruvate + ATP = phosphoenolpyruvate + ADP + H(+). It functions in the pathway carbohydrate degradation; glycolysis; pyruvate from D-glyceraldehyde 3-phosphate: step 5/5. In Agaricus bisporus (White button mushroom), this protein is Pyruvate kinase (pkiA).